Consider the following 256-residue polypeptide: MLAKFGLCAVFLVLGTAATFDTDPEEASPRRARFSSNSPSDVARCLNGALAVGCGTFACLENSTCDTDGMHDICQLFFHTAATFNTQGKTFVKESLRCIANGVTSKVFQTIRRCGVFQRMISEVQEECYSRLDICGVARSNPEAIGEVVQVPAHFPNRYYSTLLQSLLACDEETVAVVRAGLVARLGPDMETLFQLLQNKHCPQGSNQGPNSAPAGWRWPMGSPPSFKIQPSMRGRDPTHLFARKRSVEALERVME.

A signal peptide spans M1–A18. Residues T19–R33 constitute a propeptide that is removed on maturation. N-linked (GlcNAc...) asparagine glycosylation is present at N62.

It belongs to the stanniocalcin family. In terms of assembly, homodimer; disulfide-linked. As to expression, produced and secreted by the corpuscles of Stannius.

The protein resides in the secreted. Functionally, its primary function is the prevention of hypercalcemia. Upon release into the circulation, it lowers calcium transport by the gills, thereby reducing its rate of influx from the environment into the extracellular compartment. STC also stimulates phosphate reabsorption by renal proximal tubules. The consequence of this action is increased levels of plasma phosphate, which combines with excess calcium and promotes its disposal into bone and scales. This chain is Stanniocalcin (stc), found in Oncorhynchus kisutch (Coho salmon).